Consider the following 123-residue polypeptide: Large ribosomal subunit protein uL14 (123 aa).

The protein belongs to the universal ribosomal protein uL14 family. In terms of assembly, part of the 50S ribosomal subunit. Forms a cluster with proteins L3 and L19. In the 70S ribosome, L14 and L19 interact and together make contacts with the 16S rRNA in bridges B5 and B8.

Binds to 23S rRNA. Forms part of two intersubunit bridges in the 70S ribosome. The chain is Large ribosomal subunit protein uL14 from Corynebacterium urealyticum (strain ATCC 43042 / DSM 7109).